The primary structure comprises 1063 residues: Endo-1,4-beta-xylanase 2 (1063 aa).

4 consecutive CBM-cenC domains span residues 5-146 (NIVM…GPAP), 183-313 (NIIK…LEGP), 348-482 (NHIF…IEGP), and 517-662 (NIVS…QGPS). The 296-residue stretch at 711-1006 (SGATVKIRQT…NEAGKRFLEI (296 aa)) folds into the GH10 domain. Glutamate 840 functions as the Proton donor in the catalytic mechanism. The active-site Nucleophile is the glutamate 941.

This sequence belongs to the glycosyl hydrolase 10 (cellulase F) family.

The enzyme catalyses Endohydrolysis of (1-&gt;4)-beta-D-xylosidic linkages in xylans.. It participates in glycan degradation; xylan degradation. Binds to and hydrolyzes insoluble and soluble xylan substrates. The chain is Endo-1,4-beta-xylanase 2 from Arabidopsis thaliana (Mouse-ear cress).